An 88-amino-acid chain; its full sequence is Small ribosomal subunit protein bS20 (88 aa).

The tract at residues 1 to 20 (MANTAQARKRARQAVVQNAH) is disordered.

Belongs to the bacterial ribosomal protein bS20 family.

Its function is as follows. Binds directly to 16S ribosomal RNA. This chain is Small ribosomal subunit protein bS20, found in Ralstonia pickettii (strain 12J).